Reading from the N-terminus, the 319-residue chain is Transaldolase (319 aa).

Catalysis depends on K126, which acts as the Schiff-base intermediate with substrate.

This sequence belongs to the transaldolase family. Type 1 subfamily. As to quaternary structure, homodimer.

The protein localises to the cytoplasm. The enzyme catalyses D-sedoheptulose 7-phosphate + D-glyceraldehyde 3-phosphate = D-erythrose 4-phosphate + beta-D-fructose 6-phosphate. It participates in carbohydrate degradation; pentose phosphate pathway; D-glyceraldehyde 3-phosphate and beta-D-fructose 6-phosphate from D-ribose 5-phosphate and D-xylulose 5-phosphate (non-oxidative stage): step 2/3. Transaldolase is important for the balance of metabolites in the pentose-phosphate pathway. The chain is Transaldolase from Bordetella petrii (strain ATCC BAA-461 / DSM 12804 / CCUG 43448).